The following is a 263-amino-acid chain: Aquaporin-8 (263 aa).

Residues 1–38 are Cytoplasmic-facing; sequence MSGEQTPMCSMDLREIKGKETNMADSYHGMSWYEQYIQ. The chain crosses the membrane as a helical span at residues 39-59; that stretch reads PCVVELLGSALFIFIGCLSVI. Position 55 is a cysteine persulfide (Cys55). Cys55 is modified (cysteine sulfenic acid (-SOH)). At 60 to 86 the chain is on the extracellular side; the sequence is ENSPNTGLLQPALAHGLALGLIIATLG. Residues 87–107 form a helical membrane-spanning segment; sequence NISGGHFNPAVSLAVTLVGGL. An NPA 1 motif is present at residues 94 to 96; that stretch reads NPA. At 108–109 the chain is on the cytoplasmic side; it reads KT. A helical membrane pass occupies residues 110–130; that stretch reads MLLIPYWVSQLFGGMIGAALA. The Extracellular segment spans residues 131–158; the sequence is KVVSPEERFWNASGAAFAIVQEQEQVAE. A glycan (N-linked (GlcNAc...) asparagine) is linked at Asn141. The chain crosses the membrane as a helical span at residues 159-179; that stretch reads ALGVEIVMTMLLVLAVCMGAV. Over 180–185 the chain is Cytoplasmic; it reads NEKTMG. Residues 186–206 traverse the membrane as a helical segment; the sequence is PLAPFSIGFSVIVDILAGGGI. Residues 207–230 lie on the Extracellular side of the membrane; it reads SGACMNPARAFGPAVMAGYWDFHW. The NPA 2 motif lies at 212-214; the sequence is NPA. Residues 231–251 traverse the membrane as a helical segment; the sequence is IYWLGPLLAGLFVGLLIRLFI. Topologically, residues 252–263 are cytoplasmic; sequence GDEKTRLILKSR.

Belongs to the MIP/aquaporin (TC 1.A.8) family. Post-translationally, N-glycosylated. Sulfenylation at Cys-55(C55-SOH) when hydrogen peroxide flows through the AQP8 channel, making it susceptible to hydrogen sulfide produced by CBS. In terms of processing, persulfidation at Cys-55 is required to gate AQP8 channel; under stress condition, hydrogen peroxide accumulates in the cell leading to CBS activation that produces hydrogen sulfide inducing persulfidation of oxidized Cys-55 (C55-SOH). As to expression, highly expressed in sperm, pancreas and liver. Expressed in hepatocytes, acinal cells of pancreas and salivary gland, and absorptive colonic epithelial cells. Expressed in the myoepithelium of submandibular and parotid glands. Expressed in pancreatic beta-cells. Expressed in testis but not in epididymis. Expressed in small intestine.

The protein localises to the cell membrane. Its subcellular location is the mitochondrion inner membrane. The protein resides in the apical cell membrane. It is found in the basolateral cell membrane. It localises to the smooth endoplasmic reticulum membrane. It carries out the reaction H2O(in) = H2O(out). The enzyme catalyses NH4(+)(in) = NH4(+)(out). It catalyses the reaction H2O2(out) = H2O2(in). The catalysed reaction is formamide(out) = formamide(in). It carries out the reaction methylamine(out) = methylamine(in). Reversibly gated by a two-step sulfenylation-persulfidation process in cells undergoing diverse stresses. Channel that allows the facilitated permeation of water and uncharged molecules, such as hydrogen peroxide and the neutral form of ammonia (NH3), through cellular membranes such as plasma membrane, inner mitochondrial membrane and endoplasmic reticulum membrane of several tissues. The transport of ammonia neutral form induces a parallel transport of proton, at alkaline pH when the concentration of ammonia is high. However, it is unclear whether the transport of proton takes place via the aquaporin or via an endogenous pathway. Also, may transport ammonia analogs such as formamide and methylamine, a transport favourited at basic pH due to the increase of unprotonated (neutral) form, which is expected to favor diffusion. Does not transport urea or glycerol. The water transport mechanism is mercury- and copper-sensitive and passive in response to osmotic driving forces. At the canicular plasma membrane, mediates the osmotic transport of water toward the bile canaliculus and facilitates the cAMP-induced bile canalicular water secretion, a process involved in bile formation. In addition, mediates the hydrogen peroxide release from hepatocyte mitochondria that modulates the SREBF2-mediated cholesterol synthesis and facilitates the mitochondrial ammonia uptake which is metabolized into urea, mainly under glucagon stimulation. In B cells, transports the CYBB-generated hydrogen peroxide from the external leaflet of the plasma membrane to the cytosol to promote B cell activation and differentiation for signal amplification. In the small intestine and colon system, mediates water transport through mitochondria and apical membrane of epithelial cells. May play an important role in the adaptive response of proximal tubule cells to acidosis possibly facilitating mitochondrial ammonia transport. This chain is Aquaporin-8, found in Rattus norvegicus (Rat).